We begin with the raw amino-acid sequence, 490 residues long: N-succinylglutamate 5-semialdehyde dehydrogenase (490 aa).

223–228 (GSAGTG) lines the NAD(+) pocket. Catalysis depends on residues E246 and C280.

Belongs to the aldehyde dehydrogenase family. AstD subfamily.

The enzyme catalyses N-succinyl-L-glutamate 5-semialdehyde + NAD(+) + H2O = N-succinyl-L-glutamate + NADH + 2 H(+). It participates in amino-acid degradation; L-arginine degradation via AST pathway; L-glutamate and succinate from L-arginine: step 4/5. Functionally, catalyzes the NAD-dependent reduction of succinylglutamate semialdehyde into succinylglutamate. The polypeptide is N-succinylglutamate 5-semialdehyde dehydrogenase (Serratia proteamaculans (strain 568)).